The primary structure comprises 185 residues: Large ribosomal subunit protein uL6 (185 aa).

Belongs to the universal ribosomal protein uL6 family. As to quaternary structure, part of the 50S ribosomal subunit.

Its function is as follows. This protein binds to the 23S rRNA, and is important in its secondary structure. It is located near the subunit interface in the base of the L7/L12 stalk, and near the tRNA binding site of the peptidyltransferase center. This is Large ribosomal subunit protein uL6 from Staphylothermus marinus (strain ATCC 43588 / DSM 3639 / JCM 9404 / F1).